Here is a 180-residue protein sequence, read N- to C-terminus: MPNIWGGMLEKTVKITFIFESEKRLNWEGYVNYLIFAHYFKLIYILLRNNKELLERILKDSLDNKEDYHKLGKYLHHDIMGYIRRHGYLSFLPFTPLPFYKELCEKFMTKIPEKPIIDYKCIERIENNKIIFEFEGEEECLRCLMYLKDSSIDESIKVIKSEEMVVKILEILLYILHNLL.

This is an uncharacterized protein from Methanocaldococcus jannaschii (strain ATCC 43067 / DSM 2661 / JAL-1 / JCM 10045 / NBRC 100440) (Methanococcus jannaschii).